The following is a 407-amino-acid chain: Methylthioribose kinase (407 aa).

Residues N40, K57, and E111–L113 each bind ATP. D229 is a binding site for substrate. Residue D246 to E248 coordinates ATP. A substrate-binding site is contributed by R344.

Belongs to the methylthioribose kinase family. As to quaternary structure, homodimer.

The enzyme catalyses 5-(methylsulfanyl)-D-ribose + ATP = 5-(methylsulfanyl)-alpha-D-ribose 1-phosphate + ADP + H(+). The protein operates within amino-acid biosynthesis; L-methionine biosynthesis via salvage pathway; S-methyl-5-thio-alpha-D-ribose 1-phosphate from S-methyl-5'-thioadenosine (hydrolase route): step 2/2. Its function is as follows. Catalyzes the phosphorylation of methylthioribose into methylthioribose-1-phosphate. This Yersinia pseudotuberculosis serotype IB (strain PB1/+) protein is Methylthioribose kinase.